The following is a 110-amino-acid chain: Chorion class B protein M2410 (110 aa).

Tandem repeats lie at residues 1–4 (YGGL), 5–9 (GYGGL), 10–14 (GYGGL), and 15–19 (GYGGL). Residues 1-19 (YGGLGYGGLGYGGLGYGGL) are 4 X 5 AA tandem repeats of G-Y-G-G-L. The left arm stretch occupies residues 1-27 (YGGLGYGGLGYGGLGYGGLGGGCGRGF). The interval 28 to 96 (SGGGLPVATA…GNGDVGITRE (69 aa)) is central domain. The tract at residues 97 to 110 (GGLGYGAGYGGGYG) is right arm (Gly-rich tandem repeats).

The protein belongs to the chorion protein family.

This protein is one of many from the eggshell of the silk moth. The chain is Chorion class B protein M2410 from Bombyx mori (Silk moth).